Consider the following 107-residue polypeptide: Iron-binding protein IscA (107 aa).

3 residues coordinate Fe cation: C35, C99, and C101.

Belongs to the HesB/IscA family. As to quaternary structure, homodimer; may form tetramers and higher multimers. The cofactor is Fe cation.

Is able to transfer iron-sulfur clusters to apo-ferredoxin. Multiple cycles of [2Fe2S] cluster formation and transfer are observed, suggesting that IscA acts catalytically. Recruits intracellular free iron so as to provide iron for the assembly of transient iron-sulfur cluster in IscU in the presence of IscS, L-cysteine and the thioredoxin reductase system TrxA/TrxB. This chain is Iron-binding protein IscA, found in Salmonella newport (strain SL254).